Here is a 623-residue protein sequence, read N- to C-terminus: Glutathione import ATP-binding protein GsiA (623 aa).

2 consecutive ABC transporter domains span residues 15–269 and 314–564; these read VENL…RALL and LRVR…RKLL. ATP contacts are provided by residues 49-56 and 357-364; these read GESGSGKS.

It belongs to the ABC transporter superfamily. Glutathione importer (TC 3.A.1.5.11) family. As to quaternary structure, the complex is composed of two ATP-binding proteins (GsiA), two transmembrane proteins (GsiC and GsiD) and a solute-binding protein (GsiB).

The protein localises to the cell inner membrane. The catalysed reaction is glutathione(out) + ATP + H2O = glutathione(in) + ADP + phosphate + H(+). Its function is as follows. Part of the ABC transporter complex GsiABCD involved in glutathione import. Responsible for energy coupling to the transport system. This Shigella sonnei (strain Ss046) protein is Glutathione import ATP-binding protein GsiA.